We begin with the raw amino-acid sequence, 1381 residues long: Hepatocyte growth factor receptor (1381 aa).

A signal peptide spans 1-24 (MKAPAVLAPGILVLLFTLVQKSKG). The Extracellular segment spans residues 25 to 932 (ECKEALVKST…VIVQPDQNFT (908 aa)). Residues 27-515 (KEALVKSTMN…TGKKITKIPL (489 aa)) form the Sema domain. Residue N45 is glycosylated (N-linked (GlcNAc...) asparagine). Intrachain disulfides connect C95-C101, C98-C160, C133-C141, and C173-C176. N106 is a glycosylation site (N-linked (GlcNAc...) asparagine). N-linked (GlcNAc...) asparagine glycosylation is found at N203 and N359. 2 cysteine pairs are disulfide-bonded: C299–C364 and C386–C398. N-linked (GlcNAc...) asparagine glycans are attached at residues N400 and N406. 4 cysteine pairs are disulfide-bonded: C520–C538, C526–C561, C529–C545, and C541–C551. IPT/TIG domains lie at 563–655 (PTVY…FSYV), 657–739 (PVIT…FTYR), and 742–836 (PIVY…LIYV). O-linked (Man) threonine glycosylation is present at T582. N607 and N635 each carry an N-linked (GlcNAc...) asparagine glycan. Residues T676 and T761 are each glycosylated (O-linked (Man) threonine). N785, N879, and N930 each carry an N-linked (GlcNAc...) asparagine glycan. The helical transmembrane segment at 933–955 (GLIVGVVSISIILLLLLGLFLWL) threads the bilayer. Topologically, residues 956 to 1381 (KKRKQIKDLG…QDNVDGEGDT (426 aa)) are cytoplasmic. S966 bears the Phosphoserine mark. Residue T977 is modified to Phosphothreonine. S990 and S997 each carry phosphoserine. Y1003 is subject to Phosphotyrosine. A Protein kinase domain is found at 1078-1345 (VHFNEVIGRG…RISAIFSTFI (268 aa)). Residues 1084-1092 (IGRGHFGCV) and K1110 each bind ATP. The active-site Proton acceptor is the D1204. The interaction with RANBP9 stretch occupies residues 1212-1381 (LDEKFTVKVA…QDNVDGEGDT (170 aa)). Position 1230 is a phosphotyrosine (Y1230). Phosphotyrosine; by autocatalysis is present on residues Y1234 and Y1235. T1289 carries the post-translational modification Phosphothreonine. The segment at 1320-1359 (WHPRAELRPSFSELVSRISAIFSTFIGEHYVHVNATYVNV) is interaction with MUC20. Y1349 and Y1356 each carry phosphotyrosine; by autocatalysis. Y1365 carries the post-translational modification Phosphotyrosine.

It belongs to the protein kinase superfamily. Tyr protein kinase family. Heterodimer made of an alpha chain (50 kDa) and a beta chain (145 kDa) which are disulfide linked. Binds PLXNB1. Interacts when phosphorylated with downstream effectors including STAT3, PIK3R1, SRC, PCLG1, GRB2 and GAB1. Interacts with SPSB1, SPSB2 and SPSB4. Interacts with INPP5D/SHIP1. When phosphorylated at Tyr-1356, interacts with INPPL1/SHIP2. Interacts with RANBP9 and RANBP10, as well as SPSB1, SPSB2, SPSB3 and SPSB4. SPSB1 binding occurs in the presence and in the absence of HGF, however HGF treatment has a positive effect on this interaction. Interacts with MUC20; prevents interaction with GRB2 and suppresses hepatocyte growth factor-induced cell proliferation. Interacts with GRB10. Interacts with PTPN1 and PTPN2. Interacts with HSP90AA1 and HSP90AB1; the interaction suppresses MET kinase activity. Interacts with tensin TNS3. Interacts (when phosphorylated) with tensin TNS4 (via SH2 domain); the interaction increases MET protein stability by inhibiting MET endocytosis and subsequent lysosomal degradation. Post-translationally, autophosphorylated in response to ligand binding on Tyr-1234 and Tyr-1235 in the kinase domain leading to further phosphorylation of Tyr-1349 and Tyr-1356 in the C-terminal multifunctional docking site. Dephosphorylated by PTPRJ at Tyr-1349 and Tyr-1365. Dephosphorylated by PTPN1 and PTPN2. In terms of processing, ubiquitinated. Ubiquitination by CBL regulates the receptor stability and activity through proteasomal degradation. O-mannosylation of IPT/TIG domains by TMEM260 is required for protein maturation. O-mannosylated residues are composed of single mannose glycans that are not elongated or modified.

The protein resides in the membrane. It carries out the reaction L-tyrosyl-[protein] + ATP = O-phospho-L-tyrosyl-[protein] + ADP + H(+). In its inactive state, the C-terminal tail interacts with the catalytic domain and inhibits the kinase activity. Upon ligand binding, the C-terminal tail is displaced and becomes phosphorylated, thus increasing the kinase activity. Receptor tyrosine kinase that transduces signals from the extracellular matrix into the cytoplasm by binding to hepatocyte growth factor/HGF ligand. Regulates many physiological processes including proliferation, scattering, morphogenesis and survival. Ligand binding at the cell surface induces autophosphorylation of MET on its intracellular domain that provides docking sites for downstream signaling molecules. Following activation by ligand, interacts with the PI3-kinase subunit PIK3R1, PLCG1, SRC, GRB2, STAT3 or the adapter GAB1. Recruitment of these downstream effectors by MET leads to the activation of several signaling cascades including the RAS-ERK, PI3 kinase-AKT, or PLCgamma-PKC. The RAS-ERK activation is associated with the morphogenetic effects while PI3K/AKT coordinates prosurvival effects. During embryonic development, MET signaling plays a role in gastrulation, development and migration of muscles and neuronal precursors, angiogenesis and kidney formation. In adults, participates in wound healing as well as organ regeneration and tissue remodeling. Also promotes differentiation and proliferation of hematopoietic cells. The polypeptide is Hepatocyte growth factor receptor (MET) (Sus scrofa (Pig)).